Reading from the N-terminus, the 305-residue chain is tRNA pseudouridine synthase B (305 aa).

The active-site Nucleophile is the Asp-48.

It belongs to the pseudouridine synthase TruB family. Type 1 subfamily.

It carries out the reaction uridine(55) in tRNA = pseudouridine(55) in tRNA. Responsible for synthesis of pseudouridine from uracil-55 in the psi GC loop of transfer RNAs. The polypeptide is tRNA pseudouridine synthase B (Stutzerimonas stutzeri (strain A1501) (Pseudomonas stutzeri)).